The sequence spans 178 residues: Ribosome maturation factor RimM (178 aa).

The PRC barrel domain occupies 100–173; sequence ADEYFIHQLY…QIVVRLLPGL (74 aa).

It belongs to the RimM family. In terms of assembly, binds ribosomal protein uS19.

It is found in the cytoplasm. Its function is as follows. An accessory protein needed during the final step in the assembly of 30S ribosomal subunit, possibly for assembly of the head region. Essential for efficient processing of 16S rRNA. May be needed both before and after RbfA during the maturation of 16S rRNA. It has affinity for free ribosomal 30S subunits but not for 70S ribosomes. This is Ribosome maturation factor RimM from Roseiflexus castenholzii (strain DSM 13941 / HLO8).